We begin with the raw amino-acid sequence, 154 residues long: Acidic phospholipase A2 1 (154 aa).

A signal peptide spans 1-19 (MHPAHLLVLLGVCVSLLGA). Residues 20–27 (ARIPPLPL) constitute a propeptide that is removed on maturation. Disulfide bonds link Cys38–Cys104, Cys54–Cys153, Cys56–Cys72, Cys71–Cys132, Cys78–Cys125, Cys88–Cys118, and Cys111–Cys123. Positions 55, 57, and 59 each coordinate Ca(2+). The active site involves His75. Residue Asp76 coordinates Ca(2+). Asp126 is a catalytic residue.

This sequence belongs to the phospholipase A2 family. Group I subfamily. D49 sub-subfamily. As to quaternary structure, monomer. The cofactor is Ca(2+). In terms of tissue distribution, expressed by the venom gland.

The protein localises to the secreted. It carries out the reaction a 1,2-diacyl-sn-glycero-3-phosphocholine + H2O = a 1-acyl-sn-glycero-3-phosphocholine + a fatty acid + H(+). Its function is as follows. Snake venom phospholipase A2 (PLA2) that shows moderate enzymatic activity and exhibits procoagulant activity. PLA2 catalyzes the calcium-dependent hydrolysis of the 2-acyl groups in 3-sn-phosphoglycerides. The protein is Acidic phospholipase A2 1 of Pseudonaja textilis (Eastern brown snake).